Here is a 334-residue protein sequence, read N- to C-terminus: Phosphate acyltransferase (334 aa).

It belongs to the PlsX family. As to quaternary structure, homodimer. Probably interacts with PlsY.

It localises to the cytoplasm. The enzyme catalyses a fatty acyl-[ACP] + phosphate = an acyl phosphate + holo-[ACP]. It participates in lipid metabolism; phospholipid metabolism. Catalyzes the reversible formation of acyl-phosphate (acyl-PO(4)) from acyl-[acyl-carrier-protein] (acyl-ACP). This enzyme utilizes acyl-ACP as fatty acyl donor, but not acyl-CoA. This chain is Phosphate acyltransferase, found in Streptococcus thermophilus (strain ATCC BAA-491 / LMD-9).